We begin with the raw amino-acid sequence, 475 residues long: 23S rRNA (uracil(1939)-C(5))-methyltransferase RlmD (475 aa).

In terms of domain architecture, TRAM spans 1-76 (MHRGDKPVNI…SRFSKAKVRE (76 aa)). [4Fe-4S] cluster contacts are provided by C89, C95, C98, and C178. Residues Q299, F328, N333, E349, D377, and D398 each coordinate S-adenosyl-L-methionine. C431 functions as the Nucleophile in the catalytic mechanism.

Belongs to the class I-like SAM-binding methyltransferase superfamily. RNA M5U methyltransferase family. RlmD subfamily.

The catalysed reaction is uridine(1939) in 23S rRNA + S-adenosyl-L-methionine = 5-methyluridine(1939) in 23S rRNA + S-adenosyl-L-homocysteine + H(+). Functionally, catalyzes the formation of 5-methyl-uridine at position 1939 (m5U1939) in 23S rRNA. This is 23S rRNA (uracil(1939)-C(5))-methyltransferase RlmD from Polynucleobacter necessarius subsp. necessarius (strain STIR1).